The following is a 398-amino-acid chain: Phospholipase C (398 aa).

The signal sequence occupies residues 1-28; the sequence is MKRKICKALICAALATSLWAGASTKVYA. Residues tryptophan 29, histidine 39, aspartate 84, histidine 96, histidine 154, aspartate 158, histidine 164, histidine 176, and glutamate 180 each coordinate Zn(2+). A Zn-dependent PLC domain is found at 29 to 278; that stretch reads WDGKIDGTGT…HDVSEGNDPS (250 aa). The interval 275–283 is linker; the sequence is NDPSVGKNV. One can recognise a PLAT domain in the interval 284 to 398; that stretch reads KELVAYISTS…ISGNSTYNIK (115 aa). Ca(2+) is bound by residues aspartate 297, glycine 299, threonine 300, aspartate 301, aspartate 321, asparagine 322, glycine 324, asparagine 325, aspartate 326, aspartate 364, and alanine 365.

The protein belongs to the bacterial zinc-metallophospholipase C family. Ca(2+) is required as a cofactor. Zn(2+) serves as cofactor.

The protein localises to the secreted. The catalysed reaction is a 1,2-diacyl-sn-glycero-3-phosphocholine + H2O = phosphocholine + a 1,2-diacyl-sn-glycerol + H(+). In terms of biological role, bacterial hemolysins are exotoxins that attack blood cell membranes and cause cell rupture. Constitutes an essential virulence factor in gas gangrene. Binds to eukaryotic membranes where it hydrolyzes both phosphatidylcholine and sphingomyelin. The diacylglycerol produced can activate both the arachidonic acid pathway, leading to modulation of the inflammatory response cascade and thrombosis, and protein kinase C, leading to activation of eukaryotic phospholipases and further membrane damage. Acts on human and mouse erythrocytes, but not on rabbit or horse erythrocytes. The protein is Phospholipase C (plc) of Clostridium perfringens (strain ATCC 13124 / DSM 756 / JCM 1290 / NCIMB 6125 / NCTC 8237 / Type A).